We begin with the raw amino-acid sequence, 112 residues long: Ig kappa chain V-II region 2S1.3 (112 aa).

The framework-1 stretch occupies residues 1–23 (DIVMTQAAFSNPVTLGTSASFSC). C23 and C93 are disulfide-bonded. Residues 24-39 (RSSKSLQQSKGITYLY) form a complementarity-determining-1 region. Residues 40–54 (WYLQKPGQSPQLLIY) are framework-2. The tract at residues 55–61 (QMSNLAS) is complementarity-determining-2. The interval 62-93 (GVPDRFSGSGSGTDFTLRISRVEAEDVGVYYC) is framework-3. A complementarity-determining-3 region spans residues 94 to 102 (ANLQELPYT). The segment at 103 to 112 (FGGGTKLEIK) is framework-4.

The chain is Ig kappa chain V-II region 2S1.3 from Mus musculus (Mouse).